Here is a 190-residue protein sequence, read N- to C-terminus: Large ribosomal subunit protein uL6A (190 aa).

Belongs to the universal ribosomal protein uL6 family. Component of the large ribosomal subunit (LSU). Mature yeast ribosomes consist of a small (40S) and a large (60S) subunit. The 40S small subunit contains 1 molecule of ribosomal RNA (18S rRNA) and at least 33 different proteins. The large 60S subunit contains 3 rRNA molecules (25S, 5.8S and 5S rRNA) and at least 46 different proteins. uL6 lines the binding pocket for eukaryotic elongation factor 2 (eEF2).

It localises to the cytoplasm. Its subcellular location is the nucleus. In terms of biological role, component of the ribosome, a large ribonucleoprotein complex responsible for the synthesis of proteins in the cell. The small ribosomal subunit (SSU) binds messenger RNAs (mRNAs) and translates the encoded message by selecting cognate aminoacyl-transfer RNA (tRNA) molecules. The large subunit (LSU) contains the ribosomal catalytic site termed the peptidyl transferase center (PTC), which catalyzes the formation of peptide bonds, thereby polymerizing the amino acids delivered by tRNAs into a polypeptide chain. The nascent polypeptides leave the ribosome through a tunnel in the LSU and interact with protein factors that function in enzymatic processing, targeting, and the membrane insertion of nascent chains at the exit of the ribosomal tunnel. In Schizosaccharomyces pombe (strain 972 / ATCC 24843) (Fission yeast), this protein is Large ribosomal subunit protein uL6A (rpl901).